The sequence spans 163 residues: Lipoprotein signal peptidase (163 aa).

The next 4 helical transmembrane spans lie at Ala-9 to Leu-29, Ile-42 to Gly-62, Trp-67 to Leu-87, and Ser-93 to Ile-113. Catalysis depends on residues Asp-123 and Asp-141. The chain crosses the membrane as a helical span at residues Phe-137 to Leu-157.

The protein belongs to the peptidase A8 family.

Its subcellular location is the cell inner membrane. It catalyses the reaction Release of signal peptides from bacterial membrane prolipoproteins. Hydrolyzes -Xaa-Yaa-Zaa-|-(S,diacylglyceryl)Cys-, in which Xaa is hydrophobic (preferably Leu), and Yaa (Ala or Ser) and Zaa (Gly or Ala) have small, neutral side chains.. The protein operates within protein modification; lipoprotein biosynthesis (signal peptide cleavage). In terms of biological role, this protein specifically catalyzes the removal of signal peptides from prolipoproteins. This is Lipoprotein signal peptidase from Coxiella burnetii (strain Dugway 5J108-111).